Here is a 93-residue protein sequence, read N- to C-terminus: Large ribosomal subunit protein uL23cz/uL23cy (93 aa).

It belongs to the universal ribosomal protein uL23 family. Part of the 50S ribosomal subunit.

It localises to the plastid. The protein localises to the chloroplast. Its function is as follows. Binds to 23S rRNA. This chain is Large ribosomal subunit protein uL23cz/uL23cy (rpl23-A), found in Piper cenocladum (Ant piper).